Here is a 634-residue protein sequence, read N- to C-terminus: 1-deoxy-D-xylulose-5-phosphate synthase (634 aa).

Residues His-74 and 115–117 (AHS) contribute to the thiamine diphosphate site. Asp-146 contacts Mg(2+). Thiamine diphosphate contacts are provided by residues 147–148 (GA), Asn-176, Tyr-283, and Glu-365. Asn-176 is a Mg(2+) binding site.

The protein belongs to the transketolase family. DXPS subfamily. Homodimer. It depends on Mg(2+) as a cofactor. Thiamine diphosphate is required as a cofactor.

The enzyme catalyses D-glyceraldehyde 3-phosphate + pyruvate + H(+) = 1-deoxy-D-xylulose 5-phosphate + CO2. The protein operates within metabolic intermediate biosynthesis; 1-deoxy-D-xylulose 5-phosphate biosynthesis; 1-deoxy-D-xylulose 5-phosphate from D-glyceraldehyde 3-phosphate and pyruvate: step 1/1. Catalyzes the acyloin condensation reaction between C atoms 2 and 3 of pyruvate and glyceraldehyde 3-phosphate to yield 1-deoxy-D-xylulose-5-phosphate (DXP). The chain is 1-deoxy-D-xylulose-5-phosphate synthase from Burkholderia ambifaria (strain MC40-6).